The primary structure comprises 832 residues: Protein P (832 aa).

A terminal protein domain (TP) region spans residues 1–177 (MPLSYQHFRK…FCGSPYSWEQ (177 aa)). A spacer region spans residues 178-335 (ELQHGAESFH…YCLSHLVSLL (158 aa)). The interval 336-679 (DDWGPCTEHG…YSTLYPVARQ (344 aa)) is polymerase/reverse transcriptase domain (RT). In terms of domain architecture, Reverse transcriptase spans 346-589 (EHHIRIPRTP…YSLHFMGYVI (244 aa)). Mg(2+) is bound by residues Asp418, Asp540, and Asp541.

This sequence belongs to the hepadnaviridae P protein family.

The enzyme catalyses DNA(n) + a 2'-deoxyribonucleoside 5'-triphosphate = DNA(n+1) + diphosphate. It catalyses the reaction Endonucleolytic cleavage to 5'-phosphomonoester.. With respect to regulation, activated by host HSP70 and HSP40 in vitro to be able to bind the epsilon loop of the pgRNA. Because deletion of the RNase H region renders the protein partly chaperone-independent, the chaperones may be needed indirectly to relieve occlusion of the RNA-binding site by this domain. Inhibited by several reverse-transcriptase inhibitors: Lamivudine, Adefovir and Entecavir. Its function is as follows. Multifunctional enzyme that converts the viral RNA genome into dsDNA in viral cytoplasmic capsids. This enzyme displays a DNA polymerase activity that can copy either DNA or RNA templates, and a ribonuclease H (RNase H) activity that cleaves the RNA strand of RNA-DNA heteroduplexes in a partially processive 3'- to 5'-endonucleasic mode. Neo-synthesized pregenomic RNA (pgRNA) are encapsidated together with the P protein, and reverse-transcribed inside the nucleocapsid. Initiation of reverse-transcription occurs first by binding the epsilon loop on the pgRNA genome, and is initiated by protein priming, thereby the 5'-end of (-)DNA is covalently linked to P protein. Partial (+)DNA is synthesized from the (-)DNA template and generates the relaxed circular DNA (RC-DNA) genome. After budding and infection, the RC-DNA migrates in the nucleus, and is converted into a plasmid-like covalently closed circular DNA (cccDNA). The activity of P protein does not seem to be necessary for cccDNA generation, and is presumably released from (+)DNA by host nuclear DNA repair machinery. The protein is Protein P of Pan troglodytes (Chimpanzee).